A 368-amino-acid polypeptide reads, in one-letter code: Peptide chain release factor 2 (368 aa).

Gln251 bears the N5-methylglutamine mark.

This sequence belongs to the prokaryotic/mitochondrial release factor family. In terms of processing, methylated by PrmC. Methylation increases the termination efficiency of RF2.

Its subcellular location is the cytoplasm. Functionally, peptide chain release factor 2 directs the termination of translation in response to the peptide chain termination codons UGA and UAA. The sequence is that of Peptide chain release factor 2 from Wolinella succinogenes (strain ATCC 29543 / DSM 1740 / CCUG 13145 / JCM 31913 / LMG 7466 / NCTC 11488 / FDC 602W) (Vibrio succinogenes).